A 346-amino-acid polypeptide reads, in one-letter code: Galactitol 1-phosphate 5-dehydrogenase (346 aa).

Residues Cys38, His59, Cys89, Cys92, Cys95, Cys103, and Glu144 each contribute to the Zn(2+) site.

It belongs to the zinc-containing alcohol dehydrogenase family. It depends on Zn(2+) as a cofactor.

It carries out the reaction galactitol 1-phosphate + NAD(+) = keto-D-tagatose 6-phosphate + NADH + H(+). Its function is as follows. Converts galactitol 1-phosphate to tagatose 6-phosphate. The polypeptide is Galactitol 1-phosphate 5-dehydrogenase (gatD) (Escherichia coli O157:H7).